The chain runs to 208 residues: Large ribosomal subunit protein uL4 (208 aa).

The tract at residues 49-78 (HKAKTRAEVRGGGKKPFRQKGTGNARQGST) is disordered. Positions 69 to 78 (GTGNARQGST) are enriched in polar residues.

The protein belongs to the universal ribosomal protein uL4 family. Part of the 50S ribosomal subunit.

One of the primary rRNA binding proteins, this protein initially binds near the 5'-end of the 23S rRNA. It is important during the early stages of 50S assembly. It makes multiple contacts with different domains of the 23S rRNA in the assembled 50S subunit and ribosome. In terms of biological role, forms part of the polypeptide exit tunnel. The polypeptide is Large ribosomal subunit protein uL4 (Chlorobaculum tepidum (strain ATCC 49652 / DSM 12025 / NBRC 103806 / TLS) (Chlorobium tepidum)).